The primary structure comprises 573 residues: Protein FAM200A (573 aa).

The disordered stretch occupies residues 1–51; that stretch reads MTPESRDTTDLSPRGTQEMEGIVVVKVEEEDEEDHFQKQRNKVESSPQVLS. The Extracellular segment spans residues 1 to 513; the sequence is MTPESRDTTD…DEFPLLSRKS (513 aa). The helical transmembrane segment at 514–533 threads the bilayer; it reads ISLLLPFTTTYLCELGFSIL. Over 534–573 the chain is Cytoplasmic; the sequence is TRLKTKKRNRLNSAPDMRVALSSCVPDWKELMNRQAHPSH.

The protein belongs to the FAM200 family.

The protein localises to the membrane. The protein is Protein FAM200A (FAM200A) of Macaca fascicularis (Crab-eating macaque).